Consider the following 963-residue polypeptide: Importin-13 (963 aa).

HEAT repeat units lie at residues 24–54 (ENVE…QAQV), 56–88 (PQAW…KISR), 95–135 (TDQY…LSMM), 142–179 (AVAD…EFQT), 194–231 (LAVE…SWVQ), 236–268 (LQDC…NAIS), 276–325 (VNTL…ALLD), 330–372 (WQSF…DDIL), 375–438 (EAEK…YEML), 440–476 (AELL…FQSI), 487–522 (VVPG…WLAD), 524–558 (PVMI…CREC), 562–600 (LPPY…LLSA), 603–648 (VEEI…SNLF), 676–716 (PVVV…VKTL), 720–754 (FAPM…VHIF), 761–803 (FPPI…ALKR), 815–845 (VKAV…TELL), 860–893 (EDGR…FALN), and 897–931 (FSLL…QQIL). Positions 45 to 111 (AQKWLMQAQV…KAQLFTQITR (67 aa)) constitute an Importin N-terminal domain.

Belongs to the importin beta family. In terms of assembly, interacts with UBC9, RAN, RBM8A, eIF-1A and PAX6.

The protein resides in the cytoplasm. Its subcellular location is the nucleus. Its function is as follows. Functions in nuclear protein import as nuclear transport receptor. Serves as receptor for nuclear localization signals (NLS) in cargo substrates. Is thought to mediate docking of the importin/substrate complex to the nuclear pore complex (NPC) through binding to nucleoporin and the complex is subsequently translocated through the pore by an energy requiring, Ran-dependent mechanism. At the nucleoplasmic side of the NPC, Ran binds to the importin, the importin/substrate complex dissociates and importin is re-exported from the nucleus to the cytoplasm where GTP hydrolysis releases Ran. The directionality of nuclear import is thought to be conferred by an asymmetric distribution of the GTP- and GDP-bound forms of Ran between the cytoplasm and nucleus. Mediates the nuclear import of UBC9, the RBM8A/MAGOH complex, PAX6 and probably other members of the paired homeobox family. Also mediates nuclear export of eIF-1A, and the cytoplasmic release of eIF-1A is triggered by the loading of import substrates onto IPO13. This is Importin-13 (Ipo13) from Mus musculus (Mouse).